We begin with the raw amino-acid sequence, 440 residues long: tRNA-2-methylthio-N(6)-dimethylallyladenosine synthase (440 aa).

The MTTase N-terminal domain maps to 2–118 (PKYYIITYGC…LPKILESLDG (117 aa)). [4Fe-4S] cluster contacts are provided by cysteine 11, cysteine 47, cysteine 81, cysteine 155, cysteine 159, and cysteine 162. Residues 141 to 370 (RENKFQAWIP…ENLQRKIIYE (230 aa)) enclose the Radical SAM core domain. The TRAM domain maps to 373–436 (LSRVGKEEIV…LWSLKGEVIR (64 aa)).

This sequence belongs to the methylthiotransferase family. MiaB subfamily. As to quaternary structure, monomer. [4Fe-4S] cluster is required as a cofactor.

Its subcellular location is the cytoplasm. The enzyme catalyses N(6)-dimethylallyladenosine(37) in tRNA + (sulfur carrier)-SH + AH2 + 2 S-adenosyl-L-methionine = 2-methylsulfanyl-N(6)-dimethylallyladenosine(37) in tRNA + (sulfur carrier)-H + 5'-deoxyadenosine + L-methionine + A + S-adenosyl-L-homocysteine + 2 H(+). Functionally, catalyzes the methylthiolation of N6-(dimethylallyl)adenosine (i(6)A), leading to the formation of 2-methylthio-N6-(dimethylallyl)adenosine (ms(2)i(6)A) at position 37 in tRNAs that read codons beginning with uridine. The sequence is that of tRNA-2-methylthio-N(6)-dimethylallyladenosine synthase from Dictyoglomus thermophilum (strain ATCC 35947 / DSM 3960 / H-6-12).